A 322-amino-acid polypeptide reads, in one-letter code: ATP-dependent 6-phosphofructokinase (322 aa).

G11 contacts ATP. An ADP-binding site is contributed by 21-25 (RAVVR). Residues 72–73 (RC) and 102–105 (GDGS) each bind ATP. D103 provides a ligand contact to Mg(2+). 127–129 (TID) lines the substrate pocket. Catalysis depends on D129, which acts as the Proton acceptor. R156 serves as a coordination point for ADP. Residues R164 and 171 to 173 (MGR) contribute to the substrate site. ADP contacts are provided by residues 187–189 (GAE), R213, and 215–217 (KKH). Residues E224, R245, and 251–254 (HVQR) each bind substrate.

The protein belongs to the phosphofructokinase type A (PFKA) family. ATP-dependent PFK group I subfamily. Prokaryotic clade 'B1' sub-subfamily. In terms of assembly, homotetramer. Requires Mg(2+) as cofactor.

Its subcellular location is the cytoplasm. The enzyme catalyses beta-D-fructose 6-phosphate + ATP = beta-D-fructose 1,6-bisphosphate + ADP + H(+). The protein operates within carbohydrate degradation; glycolysis; D-glyceraldehyde 3-phosphate and glycerone phosphate from D-glucose: step 3/4. Allosterically activated by ADP and other diphosphonucleosides, and allosterically inhibited by phosphoenolpyruvate. In terms of biological role, catalyzes the phosphorylation of D-fructose 6-phosphate to fructose 1,6-bisphosphate by ATP, the first committing step of glycolysis. This Staphylococcus aureus (strain MRSA252) protein is ATP-dependent 6-phosphofructokinase.